Reading from the N-terminus, the 298-residue chain is MSAHLIDGKAIAAEIDARAGEVGAKLASSLGRPPCLAVVLVGEDPASDVYVRNKVRRTEAAGLTSIEIRKSAEATEAEIIAIVERLNADDGVDGILVQMPLPGHIDTNRVIGRIDPDKDVDGLTEVSAGRLVLGKPGLRPCTPAGCVLLAERALGDLSGKSVVVIGRSILVGKPAALLFLEKNATVTIAHSRTADLPSLCRTADILVPAVGRPEMVRGDWVKPGACVLDVGINRIDAPERGAGKTRLVGDAAFDEIVGHAGWITPVPGGIGPMTIAMLLKNTVIAAALRAKQPALADF.

NADP(+) is bound by residues 166–168 (GRS), Ser191, and Ile232.

It belongs to the tetrahydrofolate dehydrogenase/cyclohydrolase family. Homodimer.

The enzyme catalyses (6R)-5,10-methylene-5,6,7,8-tetrahydrofolate + NADP(+) = (6R)-5,10-methenyltetrahydrofolate + NADPH. The catalysed reaction is (6R)-5,10-methenyltetrahydrofolate + H2O = (6R)-10-formyltetrahydrofolate + H(+). The protein operates within one-carbon metabolism; tetrahydrofolate interconversion. Functionally, catalyzes the oxidation of 5,10-methylenetetrahydrofolate to 5,10-methenyltetrahydrofolate and then the hydrolysis of 5,10-methenyltetrahydrofolate to 10-formyltetrahydrofolate. In Maricaulis maris (strain MCS10) (Caulobacter maris), this protein is Bifunctional protein FolD.